The following is a 316-amino-acid chain: D-alanine--D-alanine ligase (316 aa).

An ATP-grasp domain is found at 112 to 310; sequence KTALKAHGLP…FGKLCRWLVE (199 aa). 139 to 189 contributes to the ATP binding site; sequence MATPYVVKPNNEGSSVGVYLVNEAANGPPHLSDDMPDEVMVETYAPGRELT. Mg(2+)-binding residues include D261, E277, and N279.

Belongs to the D-alanine--D-alanine ligase family. The cofactor is Mg(2+). Mn(2+) is required as a cofactor.

It is found in the cytoplasm. The enzyme catalyses 2 D-alanine + ATP = D-alanyl-D-alanine + ADP + phosphate + H(+). It participates in cell wall biogenesis; peptidoglycan biosynthesis. In terms of biological role, cell wall formation. In Jannaschia sp. (strain CCS1), this protein is D-alanine--D-alanine ligase.